The sequence spans 65 residues: MMAKNKMKPKKALAKRIKISSTGKVKFGHAFRSHLAQNKSTKQKRQSKHGTFMHPTDYKRLKDLM.

The segment at 30 to 65 (AFRSHLAQNKSTKQKRQSKHGTFMHPTDYKRLKDLM) is disordered. Positions 56-65 (TDYKRLKDLM) are enriched in basic and acidic residues.

Belongs to the bacterial ribosomal protein bL35 family.

The protein is Large ribosomal subunit protein bL35 of Mycoplasma mobile (strain ATCC 43663 / 163K / NCTC 11711) (Mesomycoplasma mobile).